Consider the following 195-residue polypeptide: Probable GTP-binding protein EngB (195 aa).

Residues 24–195 enclose the EngB-type G domain; it reads GLSEVGLSGR…QIWNVIEKYL (172 aa). GTP is bound by residues 32 to 39, 59 to 63, 77 to 80, 144 to 147, and 176 to 178; these read GRSNVGKS, GKTQT, DVPG, TKED, and YSS. Mg(2+) is bound by residues Ser-39 and Thr-61.

The protein belongs to the TRAFAC class TrmE-Era-EngA-EngB-Septin-like GTPase superfamily. EngB GTPase family. It depends on Mg(2+) as a cofactor.

Necessary for normal cell division and for the maintenance of normal septation. The protein is Probable GTP-binding protein EngB of Staphylococcus saprophyticus subsp. saprophyticus (strain ATCC 15305 / DSM 20229 / NCIMB 8711 / NCTC 7292 / S-41).